The primary structure comprises 537 residues: Zinc finger protein 835 (537 aa).

Residues 12–109 (AELEGNWKHE…RERGGGPKKP (98 aa)) form a disordered region. Positions 63 to 77 (TISSPAATQASVPDD) are enriched in polar residues. The span at 89 to 104 (SPKERHPDSRQRERGG) shows a compositional bias: basic and acidic residues. C2H2-type zinc fingers lie at residues 110–132 (WKCG…QRIH), 138–160 (FACP…QRTH), 166–188 (YACH…WRTH), 194–216 (HRCA…RRVH), 222–244 (YACA…QRIH), 250–272 (YECS…QRIH), 278–300 (YRCG…RRVH), 306–328 (YTCQ…RRIH), 334–356 (YACG…QRTH), 362–384 (YPCH…RLVH), 390–412 (YRCL…QKIH), 418–440 (YKCG…QRTH), 446–468 (YTCP…HIVH), and 474–496 (YECS…QRTH). The interval 497–537 (ADSSGRLCPAPTPDSTPGLSQGGETCQQGCPGRNPRGPAED) is disordered. Over residues 509–524 (PDSTPGLSQGGETCQQ) the composition is skewed to polar residues.

It belongs to the krueppel C2H2-type zinc-finger protein family.

Its subcellular location is the nucleus. Its function is as follows. May be involved in transcriptional regulation. The protein is Zinc finger protein 835 (ZNF835) of Homo sapiens (Human).